Consider the following 366-residue polypeptide: tRNA/tmRNA (uracil-C(5))-methyltransferase (366 aa).

Residues Gln190, Tyr218, Asn223, Glu239, and Asp299 each coordinate S-adenosyl-L-methionine. The Nucleophile role is filled by Cys324. Glu358 serves as the catalytic Proton acceptor.

The protein belongs to the class I-like SAM-binding methyltransferase superfamily. RNA M5U methyltransferase family. TrmA subfamily.

The catalysed reaction is uridine(54) in tRNA + S-adenosyl-L-methionine = 5-methyluridine(54) in tRNA + S-adenosyl-L-homocysteine + H(+). The enzyme catalyses uridine(341) in tmRNA + S-adenosyl-L-methionine = 5-methyluridine(341) in tmRNA + S-adenosyl-L-homocysteine + H(+). Dual-specificity methyltransferase that catalyzes the formation of 5-methyluridine at position 54 (m5U54) in all tRNAs, and that of position 341 (m5U341) in tmRNA (transfer-mRNA). In Shigella dysenteriae serotype 1 (strain Sd197), this protein is tRNA/tmRNA (uracil-C(5))-methyltransferase.